Here is a 205-residue protein sequence, read N- to C-terminus: Probable molybdenum cofactor guanylyltransferase (205 aa).

GTP contacts are provided by residues 9 to 11, lysine 21, aspartate 66, and aspartate 95; that span reads LAG. Residue aspartate 95 participates in Mg(2+) binding.

Belongs to the MobA family. It depends on Mg(2+) as a cofactor.

It localises to the cytoplasm. It carries out the reaction Mo-molybdopterin + GTP + H(+) = Mo-molybdopterin guanine dinucleotide + diphosphate. In terms of biological role, transfers a GMP moiety from GTP to Mo-molybdopterin (Mo-MPT) cofactor (Moco or molybdenum cofactor) to form Mo-molybdopterin guanine dinucleotide (Mo-MGD) cofactor. In Pelotomaculum thermopropionicum (strain DSM 13744 / JCM 10971 / SI), this protein is Probable molybdenum cofactor guanylyltransferase.